The sequence spans 244 residues: 5-oxoprolinase subunit A (244 aa).

Belongs to the LamB/PxpA family. As to quaternary structure, forms a complex composed of PxpA, PxpB and PxpC.

It carries out the reaction 5-oxo-L-proline + ATP + 2 H2O = L-glutamate + ADP + phosphate + H(+). In terms of biological role, catalyzes the cleavage of 5-oxoproline to form L-glutamate coupled to the hydrolysis of ATP to ADP and inorganic phosphate. The sequence is that of 5-oxoprolinase subunit A from Shigella sonnei (strain Ss046).